We begin with the raw amino-acid sequence, 128 residues long: MYDNLKNLGIQHPEDIDRYTLRQEANNDILKIYFRKDKGEFFAKSVKFKYPRQRKTISDTQSGQGFKEVNEINTNLRYVIEELDQICQQDQVEVDLKHKILDDLRHLEHVVANKIAEIEADLEKLTRR.

It belongs to the UPF0325 family.

The polypeptide is UPF0325 protein PMI2289 (Proteus mirabilis (strain HI4320)).